Here is a 507-residue protein sequence, read N- to C-terminus: Phosphoprotein (507 aa).

Over residues 31-51 (EVSSLRDQTCNPGQENGTTGM) the composition is skewed to polar residues. Disordered regions lie at residues 31–86 (EVSS…CGER), 123–172 (IEDA…GYSF), and 242–307 (GIVA…DSEY). The segment covering 147–160 (SLDDSTEDSGEDYS) has biased composition (acidic residues). Phosphoserine is present on Ser-151. 2 stretches are compositionally biased toward polar residues: residues 246–271 (GSTS…SAGN) and 289–300 (SGTQLPPRTSNE). Residues 304-376 (DSEYDDELFS…LSSIMIAIPG (73 aa)) form a multimerization region. The stretch at 310 to 339 (ELFSEIQEIRSAITKLTEDNQAILTKLDTL) forms a coiled coil. Positions 459–507 (PSKAVLASLIRSSRVDQSHKHNMLALLKNIKGDDNLNEFYQMVKSITHA) are interaction with the nucleocapsid (N-RNA).

Belongs to the morbillivirus P protein family. In terms of assembly, homotetramer. Interacts (via multimerization domain) with polymerase L; this interaction forms the polymerase L-P complex. Interacts (via N-terminus) with N0 (via Ncore); this interaction allows P to chaperon N0 to avoid N polymerization before encapsidation. Interacts (via C-terminus) with N-RNA template; this interaction positions the polymerase on the template for both transcription and replication. Phosphorylation on serines by host CK2 is necessary for the formation of viral factories.

Essential cofactor of the RNA polymerase L that plays a central role in the transcription and replication by forming the polymerase complex with RNA polymerase L and recruiting L to the genomic N-RNA template for RNA synthesis. Also plays a central role in the encapsidation of nascent RNA chains by forming the encapsidation complex with the nucleocapsid protein N (N-P complex). Acts as a chaperone for newly synthesized free N protein, so-called N0, allowing encapsidation of nascent RNA chains during replication. The nucleoprotein protein N prevents excessive phosphorylation of P, which leads to down-regulation of viral transcription/ replication. Participates, together with N, in the formation of viral factories (viroplasms), which are large inclusions in the host cytoplasm where replication takes place. This Canine distemper virus (strain Onderstepoort) (CDV) protein is Phosphoprotein (P/V).